The primary structure comprises 239 residues: MKITILSLFPSIITPFFENSIMKKVVDRGIISYEVISIRDFSDDKHKRCDDIPYGGGAGMVLKAPPISAALEYVNAKSKTTIFVSPSGLKYTQKLAYDLSKKSELVIICGRYEGLDQRVIDLYVDLEVSVGDYVLSSGEVAALVIIDSVYRLLDGAINPSSLLEESFSFDCGLLEYPHYTRPYEFKGLEVPDVLLSGHHEEIKKWRFIKSVEKTKKNRYDLYLKYLEMIGENDGFSKKN.

Residues Gly-110 and 130–135 contribute to the S-adenosyl-L-methionine site; that span reads VGDYVL.

Belongs to the RNA methyltransferase TrmD family. Homodimer.

It localises to the cytoplasm. It carries out the reaction guanosine(37) in tRNA + S-adenosyl-L-methionine = N(1)-methylguanosine(37) in tRNA + S-adenosyl-L-homocysteine + H(+). Functionally, specifically methylates guanosine-37 in various tRNAs. This Borrelia hermsii (strain HS1 / DAH) protein is tRNA (guanine-N(1)-)-methyltransferase.